The following is a 445-amino-acid chain: Aminopeptidase C (445 aa).

Catalysis depends on residues cysteine 69, histidine 363, and asparagine 385.

It belongs to the peptidase C1 family. In terms of assembly, homohexamer.

It carries out the reaction Inactivates bleomycin B2 (a cytotoxic glycometallopeptide) by hydrolysis of a carboxyamide bond of beta-aminoalanine, but also shows general aminopeptidase activity. The specificity varies somewhat with source, but amino acid arylamides of Met, Leu and Ala are preferred.. This chain is Aminopeptidase C (pepC), found in Streptococcus thermophilus.